The following is a 298-amino-acid chain: Small ribosomal subunit protein uS3 (298 aa).

The 69-residue stretch at 39–107 (VREYLKAKLK…PVAVNIEEVR (69 aa)) folds into the KH type-2 domain. The interval 214–298 (PAAVEARTDE…PAAAADGKGE (85 aa)) is disordered. Basic and acidic residues predominate over residues 219-245 (ARTDEERRPRGPRRDDRGARPGADRPA). Positions 277–298 (KPAVQRVRKVAAPAAAADGKGE) are enriched in low complexity.

Belongs to the universal ribosomal protein uS3 family. As to quaternary structure, part of the 30S ribosomal subunit. Forms a tight complex with proteins S10 and S14.

Binds the lower part of the 30S subunit head. Binds mRNA in the 70S ribosome, positioning it for translation. In Albidiferax ferrireducens (strain ATCC BAA-621 / DSM 15236 / T118) (Rhodoferax ferrireducens), this protein is Small ribosomal subunit protein uS3.